We begin with the raw amino-acid sequence, 324 residues long: Succinylglutamate desuccinylase (324 aa).

The Zn(2+) site is built by histidine 53, glutamate 56, and histidine 148. Residue glutamate 211 is part of the active site.

The protein belongs to the AspA/AstE family. Succinylglutamate desuccinylase subfamily. The cofactor is Zn(2+).

It carries out the reaction N-succinyl-L-glutamate + H2O = L-glutamate + succinate. It functions in the pathway amino-acid degradation; L-arginine degradation via AST pathway; L-glutamate and succinate from L-arginine: step 5/5. In terms of biological role, transforms N(2)-succinylglutamate into succinate and glutamate. This chain is Succinylglutamate desuccinylase, found in Acinetobacter baumannii (strain SDF).